We begin with the raw amino-acid sequence, 337 residues long: Major envelope glycoprotein (337 aa).

N-linked (GlcNAc...) asparagine; by host glycosylation is found at Asn-76, Asn-114, Asn-271, and Asn-301.

Belongs to the baculoviridae gp64 family. Post-translationally, palmitoylated.

It is found in the virion membrane. The protein resides in the host cell membrane. Envelope phosphoglycoprotein which mediates the fusion of viral and host endosomal membranes leading to virus entry into the host cell. The sequence is that of Major envelope glycoprotein (GP67) from Lepidoptera (butterflies and moths).